The chain runs to 145 residues: DnaJ homolog subfamily B member 3 (145 aa).

Residues 1-69 enclose the J domain; the sequence is MVDYYEVLDV…KKRDIYDRYG (69 aa).

As to expression, expressed in sperm (at protein level).

In terms of biological role, may operate as a co-chaperone of the male germ cell- and haploid stage-specific Hsp70 proteins. This is DnaJ homolog subfamily B member 3 (DNAJB3) from Homo sapiens (Human).